The following is a 179-amino-acid chain: Large ribosomal subunit protein uL5 (179 aa).

It belongs to the universal ribosomal protein uL5 family. In terms of assembly, part of the 50S ribosomal subunit; part of the 5S rRNA/L5/L18/L25 subcomplex. Contacts the 5S rRNA and the P site tRNA. Forms a bridge to the 30S subunit in the 70S ribosome.

Functionally, this is one of the proteins that bind and probably mediate the attachment of the 5S RNA into the large ribosomal subunit, where it forms part of the central protuberance. In the 70S ribosome it contacts protein S13 of the 30S subunit (bridge B1b), connecting the 2 subunits; this bridge is implicated in subunit movement. Contacts the P site tRNA; the 5S rRNA and some of its associated proteins might help stabilize positioning of ribosome-bound tRNAs. The polypeptide is Large ribosomal subunit protein uL5 (Exiguobacterium sp. (strain ATCC BAA-1283 / AT1b)).